Reading from the N-terminus, the 317-residue chain is Putative 2-hydroxyacid dehydrogenase SAOUHSC_02577 (317 aa).

NAD(+)-binding positions include 155–156 (EI), 234–236 (ASR), and aspartate 260. Arginine 236 is a catalytic residue. Glutamate 265 is a catalytic residue. The active-site Proton donor is histidine 283. 283–286 (HIGN) contributes to the NAD(+) binding site.

It belongs to the D-isomer specific 2-hydroxyacid dehydrogenase family.

This is Putative 2-hydroxyacid dehydrogenase SAOUHSC_02577 from Staphylococcus aureus (strain NCTC 8325 / PS 47).